Reading from the N-terminus, the 268-residue chain is Ribosomal RNA small subunit methyltransferase A (268 aa).

Positions 17, 19, 44, 65, 89, and 110 each coordinate S-adenosyl-L-methionine.

Belongs to the class I-like SAM-binding methyltransferase superfamily. rRNA adenine N(6)-methyltransferase family. RsmA subfamily.

The protein localises to the cytoplasm. It carries out the reaction adenosine(1518)/adenosine(1519) in 16S rRNA + 4 S-adenosyl-L-methionine = N(6)-dimethyladenosine(1518)/N(6)-dimethyladenosine(1519) in 16S rRNA + 4 S-adenosyl-L-homocysteine + 4 H(+). In terms of biological role, specifically dimethylates two adjacent adenosines (A1518 and A1519) in the loop of a conserved hairpin near the 3'-end of 16S rRNA in the 30S particle. May play a critical role in biogenesis of 30S subunits. In Acidithiobacillus ferrooxidans (strain ATCC 53993 / BNL-5-31) (Leptospirillum ferrooxidans (ATCC 53993)), this protein is Ribosomal RNA small subunit methyltransferase A.